The sequence spans 137 residues: ATP synthase epsilon chain, chloroplastic (137 aa).

Belongs to the ATPase epsilon chain family. In terms of assembly, F-type ATPases have 2 components, CF(1) - the catalytic core - and CF(0) - the membrane proton channel. CF(1) has five subunits: alpha(3), beta(3), gamma(1), delta(1), epsilon(1). CF(0) has three main subunits: a, b and c.

The protein resides in the plastid. The protein localises to the chloroplast thylakoid membrane. Its function is as follows. Produces ATP from ADP in the presence of a proton gradient across the membrane. The chain is ATP synthase epsilon chain, chloroplastic from Medicago sativa (Alfalfa).